The sequence spans 1274 residues: Myosin-binding protein C, cardiac-type (1274 aa).

The residue at position 1 (Met-1) is an N-acetylmethionine. Ser-47 carries the post-translational modification Phosphoserine. Low complexity predominate over residues 107-141; the sequence is APAPAEATGAPGEAPAPAAELGESAPSPKGSSSAA. Positions 107–153 are disordered; sequence APAPAEATGAPGEAPAPAAELGESAPSPKGSSSAALNGPTPGAPDDP. Positions 153–256 constitute an Ig-like C2-type 1 domain; the sequence is PIGLFVMRPQ…FDCSNFNLTV (104 aa). Residues Gln-208, His-210, Glu-223, and His-225 each contribute to the Zn(2+) site. A phosphoserine; by PKA and PKC mark is found at Ser-275, Ser-284, and Ser-304. Phosphoserine occurs at positions 311 and 427. Ig-like C2-type domains are found at residues 362 to 452, 453 to 543, 544 to 633, and 645 to 771; these read STAF…VKEP, PVLI…VQEK, KLEV…HFME, and PKIH…VIDV. Cys-436 and Cys-443 are joined by a disulfide. Ser-550 is modified (phosphoserine). Position 607 is a phosphothreonine (Thr-607). 2 Fibronectin type-III domains span residues 774–870 and 872–967; these read APAA…IGPP and EPTH…VQEI. The region spanning 971–1065 is the Ig-like C2-type 6 domain; it reads PRLQLPRHLR…ATLVLQVVDK (95 aa). In terms of domain architecture, Fibronectin type-III 3 spans 1068-1163; sequence PPQDLRVTDA…TKEPVFIPRP (96 aa). The Ig-like C2-type 7 domain maps to 1181–1274; the sequence is PSFTQPLVNR…ECRLEVRVPQ (94 aa). Arg-1241 carries the omega-N-methylarginine modification.

Belongs to the immunoglobulin superfamily. MyBP family. Post-translationally, substrate for phosphorylation by PKA and PKC. Reversible phosphorylation appears to modulate contraction. Polyubiquitinated.

Functionally, thick filament-associated protein located in the crossbridge region of vertebrate striated muscle a bands. In vitro it binds MHC, F-actin and native thin filaments, and modifies the activity of actin-activated myosin ATPase. It may modulate muscle contraction or may play a more structural role. In Homo sapiens (Human), this protein is Myosin-binding protein C, cardiac-type (MYBPC3).